Reading from the N-terminus, the 270-residue chain is Thiazole synthase (270 aa).

The Schiff-base intermediate with DXP role is filled by Lys-111. Residues Gly-172, 198–199 (AG), and 220–221 (NT) contribute to the 1-deoxy-D-xylulose 5-phosphate site.

This sequence belongs to the ThiG family. In terms of assembly, homotetramer. Forms heterodimers with either ThiH or ThiS.

It localises to the cytoplasm. The catalysed reaction is [ThiS sulfur-carrier protein]-C-terminal-Gly-aminoethanethioate + 2-iminoacetate + 1-deoxy-D-xylulose 5-phosphate = [ThiS sulfur-carrier protein]-C-terminal Gly-Gly + 2-[(2R,5Z)-2-carboxy-4-methylthiazol-5(2H)-ylidene]ethyl phosphate + 2 H2O + H(+). The protein operates within cofactor biosynthesis; thiamine diphosphate biosynthesis. In terms of biological role, catalyzes the rearrangement of 1-deoxy-D-xylulose 5-phosphate (DXP) to produce the thiazole phosphate moiety of thiamine. Sulfur is provided by the thiocarboxylate moiety of the carrier protein ThiS. In vitro, sulfur can be provided by H(2)S. This chain is Thiazole synthase, found in Methylococcus capsulatus (strain ATCC 33009 / NCIMB 11132 / Bath).